The chain runs to 239 residues: MHQDFQEDEHEYPDIRRNPLHEVTMTSYILGILLGIFVGLFPQIRFKNFNLFIIALSLFHFLEYYITAKYNPLKVHSESFLLNNGKSYMAAHSFAILECLVESFLFPDLKIFSYSLATKLCTVLGCLLVILGQYTRTIAMHTAGHSFSHIVKTKKESDHVLVKTGVYSWSRHPSYLGFFWWAIGTQLLLLNPLSLVIFIFVLWKFFSDRIRVEEKYLIEFFSAEYIEYKNKVGVGIPFI.

Residues Met-1 to Val-23 lie on the Cytoplasmic side of the membrane. Residues Thr-24–Ile-44 form a helical membrane-spanning segment. Over Arg-45–Lys-47 the chain is Lumenal. Residues Asn-48 to Ala-68 traverse the membrane as a helical segment. Residues Lys-69–Tyr-88 are Cytoplasmic-facing. A helical transmembrane segment spans residues Met-89 to Leu-109. Lys-110 is a topological domain (lumenal). Residues Ile-111 to Leu-131 traverse the membrane as a helical segment. At Gly-132 to Tyr-175 the chain is on the cytoplasmic side. S-adenosyl-L-methionine-binding positions include His-159–Val-162, Tyr-167, and His-172–Tyr-175. The segment at residues Leu-176–Phe-206 is an intramembrane region (helical). The Cytoplasmic segment spans residues Ser-207 to Ile-239. Substrate is bound at residue Arg-209. Glu-213 provides a ligand contact to S-adenosyl-L-methionine.

Belongs to the class VI-like SAM-binding methyltransferase superfamily. Isoprenylcysteine carboxyl methyltransferase family.

It is found in the endoplasmic reticulum membrane. It carries out the reaction [protein]-C-terminal S-[(2E,6E)-farnesyl]-L-cysteine + S-adenosyl-L-methionine = [protein]-C-terminal S-[(2E,6E)-farnesyl]-L-cysteine methyl ester + S-adenosyl-L-homocysteine. Its function is as follows. Mediates C-terminal methylation of the isoprenylated C-terminal cysteine in A-factor mating pheromone and Ras proteins. Does not have a preference for the farnesyl or geranylgeranyl moieties in the model substrates N-acetyl-S-farnesyl-L-cysteine (AFC) and N-acetyl-S-geranylgeranyl-L-cysteine (AGGC) in vitro. This Saccharomyces cerevisiae (strain ATCC 204508 / S288c) (Baker's yeast) protein is Protein-S-isoprenylcysteine O-methyltransferase (STE14).